Consider the following 452-residue polypeptide: Pup--protein ligase (452 aa).

E9 lines the Mg(2+) pocket. ATP is bound at residue R53. A Mg(2+)-binding site is contributed by Y55. Residue D57 is the Proton acceptor of the active site. A Mg(2+)-binding site is contributed by E63. 2 residues coordinate ATP: T66 and W419.

This sequence belongs to the Pup ligase/Pup deamidase family. Pup-conjugating enzyme subfamily.

The enzyme catalyses ATP + [prokaryotic ubiquitin-like protein]-L-glutamate + [protein]-L-lysine = ADP + phosphate + N(6)-([prokaryotic ubiquitin-like protein]-gamma-L-glutamyl)-[protein]-L-lysine.. The protein operates within protein degradation; proteasomal Pup-dependent pathway. It participates in protein modification; protein pupylation. Its function is as follows. Catalyzes the covalent attachment of the prokaryotic ubiquitin-like protein modifier Pup to the proteasomal substrate proteins, thereby targeting them for proteasomal degradation. This tagging system is termed pupylation. The ligation reaction involves the side-chain carboxylate of the C-terminal glutamate of Pup and the side-chain amino group of a substrate lysine. This Mycolicibacterium gilvum (strain PYR-GCK) (Mycobacterium gilvum (strain PYR-GCK)) protein is Pup--protein ligase.